The chain runs to 307 residues: MEQVRNYYQILGVPRNATAEEIKKSFRKLARQYHPDVNPNDKTAEEKFKDINEAYDVLSDETKRRELDSRLFGRFRRPPTSRFSPNSNGGRSPNGTSVNGQVRTPTGRTGTRQPAQSWQDFSETRRTKVVSPARPVPRDVEANLTLPLEKAYRGGKERIRLEDGRSLEVEMPGGMGDGQRIRLKQQGINGGDLYLKINLSPHPLFTLQGTDIACQVPVTPSEAILGGAIEVMTIDGLVKMTVPAGLKNGQKLRLAKKGFPNNQGDRGDQLVEIRVEIPPEPSPEELELYRRIREKETFNPRQKFFDF.

The 66-residue stretch at 6–71 (NYYQILGVPR…TKRRELDSRL (66 aa)) folds into the J domain. The tract at residues 69–133 (SRLFGRFRRP…TRRTKVVSPA (65 aa)) is disordered. A compositionally biased stretch (polar residues) spans 88 to 99 (NGGRSPNGTSVN). Positions 100–114 (GQVRTPTGRTGTRQP) are enriched in low complexity.

It belongs to the DnaJ family. As to quaternary structure, homodimer. Zn(2+) serves as cofactor.

The protein resides in the cytoplasm. Its function is as follows. Participates actively in the response to hyperosmotic and heat shock by preventing the aggregation of stress-denatured proteins and by disaggregating proteins, also in an autonomous, DnaK-independent fashion. Unfolded proteins bind initially to DnaJ; upon interaction with the DnaJ-bound protein, DnaK hydrolyzes its bound ATP, resulting in the formation of a stable complex. GrpE releases ADP from DnaK; ATP binding to DnaK triggers the release of the substrate protein, thus completing the reaction cycle. Several rounds of ATP-dependent interactions between DnaJ, DnaK and GrpE are required for fully efficient folding. Also involved, together with DnaK and GrpE, in the DNA replication of plasmids through activation of initiation proteins. The sequence is that of Chaperone protein DnaJ 2 (dnaJ2) from Synechocystis sp. (strain ATCC 27184 / PCC 6803 / Kazusa).